The primary structure comprises 116 residues: uncharacterized protein (116 aa).

Helical transmembrane passes span 5-27 (AILLSLAGIADSSYLLLSEAVPC), 42-64 (PFVPALLGLCWFVLSIVVFTAGV), and 88-110 (VLHGYFCPYCFTAYGIGIVVVAI).

It localises to the cell membrane. This is an uncharacterized protein from Archaeoglobus fulgidus (strain ATCC 49558 / DSM 4304 / JCM 9628 / NBRC 100126 / VC-16).